Here is a 227-residue protein sequence, read N- to C-terminus: Protein MobD (227 aa).

This is Protein MobD (mobD) from Acidithiobacillus ferrooxidans (Thiobacillus ferrooxidans).